Consider the following 252-residue polypeptide: Methionine aminopeptidase (252 aa).

Residue H76 participates in substrate binding. A divalent metal cation-binding residues include D93, D104, and H168. H175 contributes to the substrate binding site. A divalent metal cation contacts are provided by E202 and E233.

This sequence belongs to the peptidase M24A family. Methionine aminopeptidase type 1 subfamily. In terms of assembly, monomer. Co(2+) serves as cofactor. It depends on Zn(2+) as a cofactor. The cofactor is Mn(2+). Fe(2+) is required as a cofactor.

The catalysed reaction is Release of N-terminal amino acids, preferentially methionine, from peptides and arylamides.. Functionally, removes the N-terminal methionine from nascent proteins. The N-terminal methionine is often cleaved when the second residue in the primary sequence is small and uncharged (Met-Ala-, Cys, Gly, Pro, Ser, Thr, or Val). Requires deformylation of the N(alpha)-formylated initiator methionine before it can be hydrolyzed. This Staphylococcus aureus (strain MRSA252) protein is Methionine aminopeptidase.